The sequence spans 412 residues: Phosphoglycerate kinase (412 aa).

Residues 26–28, arginine 42, 65–68, arginine 133, and arginine 166 contribute to the substrate site; these read DFN and HLGR. Residues lysine 217, glycine 308, glutamate 339, and 368 to 371 contribute to the ATP site; that span reads GGDS.

The protein belongs to the phosphoglycerate kinase family. Monomer.

The protein localises to the cytoplasm. The catalysed reaction is (2R)-3-phosphoglycerate + ATP = (2R)-3-phospho-glyceroyl phosphate + ADP. Its pathway is carbohydrate degradation; glycolysis; pyruvate from D-glyceraldehyde 3-phosphate: step 2/5. In Synechococcus sp. (strain JA-3-3Ab) (Cyanobacteria bacterium Yellowstone A-Prime), this protein is Phosphoglycerate kinase.